The chain runs to 599 residues: Phosphomethylpyrimidine synthase (599 aa).

Positions 1–16 are enriched in polar residues; that stretch reads MSAASANSVTNPSAWE. 2 disordered regions span residues 1–53 and 82–108; these read MSAA…PNDP and EDTE…GAAS. The segment covering 87 to 100 has biased composition (basic and acidic residues); that stretch reads YAGRERNLADDGRS. Substrate contacts are provided by residues Asn-192, Met-221, Tyr-250, His-286, 306 to 308, 347 to 350, and Glu-386; these read SRG and DGLR. Residue His-390 participates in Zn(2+) binding. Tyr-413 serves as a coordination point for substrate. A Zn(2+)-binding site is contributed by His-454. Residues Cys-534, Cys-537, and Cys-542 each coordinate [4Fe-4S] cluster.

It belongs to the ThiC family. The cofactor is [4Fe-4S] cluster.

It catalyses the reaction 5-amino-1-(5-phospho-beta-D-ribosyl)imidazole + S-adenosyl-L-methionine = 4-amino-2-methyl-5-(phosphooxymethyl)pyrimidine + CO + 5'-deoxyadenosine + formate + L-methionine + 3 H(+). It participates in cofactor biosynthesis; thiamine diphosphate biosynthesis. In terms of biological role, catalyzes the synthesis of the hydroxymethylpyrimidine phosphate (HMP-P) moiety of thiamine from aminoimidazole ribotide (AIR) in a radical S-adenosyl-L-methionine (SAM)-dependent reaction. The polypeptide is Phosphomethylpyrimidine synthase (Corynebacterium diphtheriae (strain ATCC 700971 / NCTC 13129 / Biotype gravis)).